A 364-amino-acid chain; its full sequence is DNA replication and repair protein RecF (364 aa).

An ATP-binding site is contributed by 30 to 37 (GENGSGKT).

This sequence belongs to the RecF family.

Its subcellular location is the cytoplasm. Functionally, the RecF protein is involved in DNA metabolism; it is required for DNA replication and normal SOS inducibility. RecF binds preferentially to single-stranded, linear DNA. It also seems to bind ATP. In Xylella fastidiosa (strain M12), this protein is DNA replication and repair protein RecF.